Here is a 1167-residue protein sequence, read N- to C-terminus: Topoisomerase 1-associated factor 1 (1167 aa).

5 disordered regions span residues 332 to 353, 563 to 594, 889 to 969, 981 to 1093, and 1105 to 1167; these read SKRWNKPRRGRKAQDMSVNNDF, SRRRARKRKREEQLVNKGSDEEQESEDEDYAE, KYSH…LENT, YVHA…DAID, and FDDD…SDSE. Residues 572-582 show a composition bias toward basic and acidic residues; it reads REEQLVNKGSD. 2 stretches are compositionally biased toward acidic residues: residues 583–593 and 949–958; these read EEQESEDEDYA and EEEPVDEETL. Composition is skewed to basic and acidic residues over residues 959–969 and 996–1013; these read EERRQARLENT and EFFRLEEERRNEQSERIK. Over residues 1062–1074 the composition is skewed to acidic residues; it reads ELEEDDILMDDME. The segment covering 1078-1088 has biased composition (polar residues); the sequence is RASSGEYSSND. Residues 1110-1127 show a composition bias toward basic and acidic residues; sequence AFGRDRDKDETSVDRDGA.

It belongs to the timeless family.

It is found in the nucleus. Involved in chromosome segregation during meiosis and DNA damage repair. The polypeptide is Topoisomerase 1-associated factor 1 (tof1) (Emericella nidulans (strain FGSC A4 / ATCC 38163 / CBS 112.46 / NRRL 194 / M139) (Aspergillus nidulans)).